The following is a 197-amino-acid chain: uncharacterized protein (197 aa).

Helical transmembrane passes span 9–29 (IYIL…RFIL), 67–87 (LASL…ILML), 104–124 (IIAV…ISVI), and 160–180 (GLDL…MLVI).

The protein belongs to the YggT family.

It localises to the cell membrane. This is an uncharacterized protein from Pseudomonas aeruginosa (strain ATCC 15692 / DSM 22644 / CIP 104116 / JCM 14847 / LMG 12228 / 1C / PRS 101 / PAO1).